A 230-amino-acid polypeptide reads, in one-letter code: Transmembrane protein 225 (230 aa).

Topologically, residues 1 to 8 are cytoplasmic; the sequence is MMHIPNRS. Residues 9-29 form a helical membrane-spanning segment; the sequence is IQAANIFFSSGAILLLIVGLI. The Extracellular segment spans residues 30–71; the sequence is MEDWVELIPKVRKDKTTHSPWLGCCPPFWPEESLEVVRRIMR. A helical transmembrane segment spans residues 72–92; it reads MTLNISIYLNLIIGLQFSYMI. The Cytoplasmic portion of the chain corresponds to 93–99; sequence SQNKCVH. A helical transmembrane segment spans residues 100–120; the sequence is LLVGFLSFFAGCLLFYAIIVY. The Extracellular portion of the chain corresponds to 121-139; sequence HHKLNKGQYVYFVNYKTKW. A helical membrane pass occupies residues 140–160; it reads IAFTVYLTIALFLTCGIFCFI. Residues 161 to 230 lie on the Cytoplasmic side of the membrane; sequence QSTNRCECMK…TQARRVTWAL (70 aa). The RVxF motif lies at 224 to 228; it reads RRVTW.

As to quaternary structure, interacts (via RVxF motif) with PPP1CC. In terms of tissue distribution, expressed in testis, epididymis and spermatozoa (at protein level). Not expressed in brain, heart, lung, liver, spleen, kidney and skeletal muscle.

Its subcellular location is the cytoplasmic vesicle. It localises to the secretory vesicle. It is found in the acrosome membrane. Its function is as follows. Probably inhibits protein phosphatase 1 (PP1) in sperm via binding to catalytic subunit PPP1CC. The sequence is that of Transmembrane protein 225 (Tmem225) from Mus musculus (Mouse).